Reading from the N-terminus, the 276-residue chain is Putative pyruvate, phosphate dikinase regulatory protein (276 aa).

151–158 (GISRTSKT) is an ADP binding site.

This sequence belongs to the pyruvate, phosphate/water dikinase regulatory protein family. PDRP subfamily.

It carries out the reaction N(tele)-phospho-L-histidyl/L-threonyl-[pyruvate, phosphate dikinase] + ADP = N(tele)-phospho-L-histidyl/O-phospho-L-threonyl-[pyruvate, phosphate dikinase] + AMP + H(+). It catalyses the reaction N(tele)-phospho-L-histidyl/O-phospho-L-threonyl-[pyruvate, phosphate dikinase] + phosphate + H(+) = N(tele)-phospho-L-histidyl/L-threonyl-[pyruvate, phosphate dikinase] + diphosphate. Its function is as follows. Bifunctional serine/threonine kinase and phosphorylase involved in the regulation of the pyruvate, phosphate dikinase (PPDK) by catalyzing its phosphorylation/dephosphorylation. In Streptococcus agalactiae serotype Ia (strain ATCC 27591 / A909 / CDC SS700), this protein is Putative pyruvate, phosphate dikinase regulatory protein.